Here is a 67-residue protein sequence, read N- to C-terminus: Protein AaeX (67 aa).

2 helical membrane-spanning segments follow: residues 9–29 and 47–67; these read IFGL…ALFF and PALF…CLFV.

This sequence belongs to the AaeX family.

The protein resides in the cell membrane. The protein is Protein AaeX of Serratia marcescens.